A 547-amino-acid polypeptide reads, in one-letter code: Chaperonin GroEL 1 (547 aa).

ATP is bound by residues 30-33 (TLGP), K51, 87-91 (DGTTT), G415, and D496.

The protein belongs to the chaperonin (HSP60) family. As to quaternary structure, forms a cylinder of 14 subunits composed of two heptameric rings stacked back-to-back. Interacts with the co-chaperonin GroES.

Its subcellular location is the cytoplasm. It catalyses the reaction ATP + H2O + a folded polypeptide = ADP + phosphate + an unfolded polypeptide.. Together with its co-chaperonin GroES, plays an essential role in assisting protein folding. The GroEL-GroES system forms a nano-cage that allows encapsulation of the non-native substrate proteins and provides a physical environment optimized to promote and accelerate protein folding. In Rhodopseudomonas palustris (strain BisB18), this protein is Chaperonin GroEL 1.